The primary structure comprises 554 residues: Urocanate hydratase (554 aa).

NAD(+) contacts are provided by residues Gly49–Gly50, Gln127, Gly173–Gly175, Glu193, Arg198, Asn239–Ala240, Gln260–His264, Tyr270–Ile271, and Tyr319. Cys407 is a catalytic residue. An NAD(+)-binding site is contributed by Gly489.

It belongs to the urocanase family. It depends on NAD(+) as a cofactor.

It localises to the cytoplasm. It carries out the reaction 4-imidazolone-5-propanoate = trans-urocanate + H2O. The protein operates within amino-acid degradation; L-histidine degradation into L-glutamate; N-formimidoyl-L-glutamate from L-histidine: step 2/3. Functionally, catalyzes the conversion of urocanate to 4-imidazolone-5-propionate. The protein is Urocanate hydratase of Bacillus velezensis (strain DSM 23117 / BGSC 10A6 / LMG 26770 / FZB42) (Bacillus amyloliquefaciens subsp. plantarum).